A 202-amino-acid polypeptide reads, in one-letter code: Large ribosomal subunit protein uL4 (202 aa).

The span at 42–52 (GTKAQKSRSQV) shows a compositional bias: polar residues. The tract at residues 42–70 (GTKAQKSRSQVSGTTKKSKKQKGGGARHG) is disordered.

This sequence belongs to the universal ribosomal protein uL4 family. In terms of assembly, part of the 50S ribosomal subunit.

Functionally, one of the primary rRNA binding proteins, this protein initially binds near the 5'-end of the 23S rRNA. It is important during the early stages of 50S assembly. It makes multiple contacts with different domains of the 23S rRNA in the assembled 50S subunit and ribosome. Forms part of the polypeptide exit tunnel. This Xylella fastidiosa (strain 9a5c) protein is Large ribosomal subunit protein uL4.